The chain runs to 307 residues: 4-hydroxythreonine-4-phosphate dehydrogenase (307 aa).

2 residues coordinate substrate: histidine 126 and threonine 127. Residues histidine 156, histidine 195, and histidine 251 each coordinate a divalent metal cation. The substrate site is built by lysine 259, asparagine 268, and arginine 277.

Belongs to the PdxA family. Homodimer. The cofactor is Zn(2+). Mg(2+) serves as cofactor. It depends on Co(2+) as a cofactor.

It localises to the cytoplasm. It catalyses the reaction 4-(phosphooxy)-L-threonine + NAD(+) = 3-amino-2-oxopropyl phosphate + CO2 + NADH. Its pathway is cofactor biosynthesis; pyridoxine 5'-phosphate biosynthesis; pyridoxine 5'-phosphate from D-erythrose 4-phosphate: step 4/5. In terms of biological role, catalyzes the NAD(P)-dependent oxidation of 4-(phosphooxy)-L-threonine (HTP) into 2-amino-3-oxo-4-(phosphooxy)butyric acid which spontaneously decarboxylates to form 3-amino-2-oxopropyl phosphate (AHAP). This Helicobacter pylori (strain P12) protein is 4-hydroxythreonine-4-phosphate dehydrogenase.